We begin with the raw amino-acid sequence, 273 residues long: Tyrosinase (273 aa).

The first 18 residues, 1 to 18, serve as a signal peptide directing secretion; sequence MLLFTMGLLLAILQPSTG. N86, N111, and N161 each carry an N-linked (GlcNAc...) asparagine glycan. The Cu cation site is built by H180, H202, and H211. N230 carries N-linked (GlcNAc...) asparagine glycosylation.

The protein belongs to the tyrosinase family. It depends on Cu(2+) as a cofactor.

The protein localises to the melanosome membrane. It localises to the melanosome. The enzyme catalyses 2 L-dopa + O2 = 2 L-dopaquinone + 2 H2O. The catalysed reaction is L-tyrosine + O2 = L-dopaquinone + H2O. This is a copper-containing oxidase that functions in the formation of pigments such as melanins and other polyphenolic compounds. Catalyzes the initial and rate limiting step in the cascade of reactions leading to melanin production from tyrosine. In addition to hydroxylating tyrosine to DOPA (3,4-dihydroxyphenylalanine), also catalyzes the oxidation of DOPA to DOPA-quinone, and possibly the oxidation of DHI (5,6-dihydroxyindole) to indole-5,6 quinone. The polypeptide is Tyrosinase (TYR) (Coturnix japonica (Japanese quail)).